The following is a 247-amino-acid chain: Phosphonates import ATP-binding protein PhnC (247 aa).

Positions 5–246 constitute an ABC transporter domain; the sequence is IEVKNLVKNY…EDDIRKVYQT (242 aa). 37-44 is a binding site for ATP; the sequence is GESGAGKS.

Belongs to the ABC transporter superfamily. Phosphonates importer (TC 3.A.1.9.1) family. The complex is composed of two ATP-binding proteins (PhnC), two transmembrane proteins (PhnE) and a solute-binding protein (PhnD).

Its subcellular location is the cell inner membrane. The catalysed reaction is phosphonate(out) + ATP + H2O = phosphonate(in) + ADP + phosphate + H(+). Functionally, part of the ABC transporter complex PhnCDE involved in phosphonates import. Responsible for energy coupling to the transport system. The sequence is that of Phosphonates import ATP-binding protein PhnC from Fusobacterium nucleatum subsp. nucleatum (strain ATCC 25586 / DSM 15643 / BCRC 10681 / CIP 101130 / JCM 8532 / KCTC 2640 / LMG 13131 / VPI 4355).